Reading from the N-terminus, the 87-residue chain is Small ribosomal subunit protein bS20 (87 aa).

Residues Met-1 to Ala-27 form a disordered region. Residues Lys-9–His-20 are compositionally biased toward basic residues.

This sequence belongs to the bacterial ribosomal protein bS20 family.

Binds directly to 16S ribosomal RNA. This is Small ribosomal subunit protein bS20 from Hydrogenovibrio crunogenus (strain DSM 25203 / XCL-2) (Thiomicrospira crunogena).